Here is a 466-residue protein sequence, read N- to C-terminus: MVSPAQPAAAMAAFARMAKGQVRNYSAPLDMAIPASKQKYIPSSGSYPKGFLVSGTHVGVKASNTKFPDLALISSETPCSAAAVFTTNKFQAAPVQVSKKTLESRQGQGIRSVVINSGCANAVTGKGGLEDAVNMGKKVDECNGLSEPSTIVMSTGVIGQRLPISKILNKIPTAHENLASTHDAWLTTARAICTTDTFPKLLSRTFALPSSPGRTYSLAGMTKGAGMIHPNMATLLGVLCTDAPIDPSALQSLLTHAVSRSFNSISVDGDTSTNDTVAILANGAAGGAPISSPASDDYTAMQEILTSFAQSLSQLVVRDGEGATKFVTVRVQNSPDYESARLIASTIARSPLVKTALYGRDANWGRILCAIGYTQGVAPGTVVPERTSVSFKPVDGSPVLKLLVNGEPEQVDEERASVILQEEDLEIVVDLGGGEKGEQGLGGEEAVYWFCDFSHEYVTINGDYRT.

The substrate site is built by Thr-194, Lys-223, Thr-234, Glu-321, Asn-461, and Thr-466. Thr-234 acts as the Nucleophile in catalysis.

The protein belongs to the ArgJ family. Heterodimer of an alpha and a beta chain. The alpha and beta chains are autoproteolytically processed from a single precursor protein within the mitochondrion.

Its subcellular location is the mitochondrion matrix. The enzyme catalyses N(2)-acetyl-L-ornithine + L-glutamate = N-acetyl-L-glutamate + L-ornithine. The catalysed reaction is L-glutamate + acetyl-CoA = N-acetyl-L-glutamate + CoA + H(+). It functions in the pathway amino-acid biosynthesis; L-arginine biosynthesis; L-ornithine and N-acetyl-L-glutamate from L-glutamate and N(2)-acetyl-L-ornithine (cyclic): step 1/1. It participates in amino-acid biosynthesis; L-arginine biosynthesis; N(2)-acetyl-L-ornithine from L-glutamate: step 1/4. In terms of biological role, catalyzes two activities which are involved in the cyclic version of arginine biosynthesis: the synthesis of acetylglutamate from glutamate and acetyl-CoA, and of ornithine by transacetylation between acetylornithine and glutamate. The polypeptide is Arginine biosynthesis bifunctional protein ArgJ, mitochondrial (Aspergillus fumigatus (strain ATCC MYA-4609 / CBS 101355 / FGSC A1100 / Af293) (Neosartorya fumigata)).